Reading from the N-terminus, the 225-residue chain is uncharacterized protein (225 aa).

This is an uncharacterized protein from Arabidopsis thaliana (Mouse-ear cress).